The chain runs to 113 residues: 14 kDa zinc-binding protein (113 aa).

The region spanning 3–113 is the HIT domain; sequence IFGKIISKEI…GGRQMNWPPG (111 aa). Positions 97 to 101 match the Histidine triad motif motif; that stretch reads HIHVH.

In terms of assembly, homodimer.

In Brassica juncea (Indian mustard), this protein is 14 kDa zinc-binding protein.